The following is a 361-amino-acid chain: Velvet complex subunit B (361 aa).

The region spanning 1 to 336 is the Velvet domain; it reads MIVRTEDQKL…GNQGQKLPLR (336 aa). 2 disordered regions span residues 42-222 and 327-361; these read PSST…NNIP and GNQGQKLPLRNRHGTGSKRRRRNQSGSEGESEDDS. Composition is skewed to low complexity over residues 57 to 74 and 93 to 107; these read PSASTTRRRTISSSSRPP and PPSSNGSGYYPSQSQ. A compositionally biased stretch (polar residues) spans 108 to 127; sequence DNLTPSSPYPPHSNSEQPQT. Residues 130–147 show a composition bias toward pro residues; sequence YPPPPPIDRAAPFPPPVL. Polar residues-rich tracts occupy residues 149 to 168, 181 to 196, and 212 to 222; these read SIQSFNRTASGDWNPSNNDD, GYTNNAQPDQPTYGSG, and SGNATPQNNIP. A compositionally biased stretch (basic residues) spans 335–349; that stretch reads LRNRHGTGSKRRRRN.

Belongs to the velvet family. VelB subfamily. Component of the heterotrimeric velvet complex composed of laeA, veA and velB; VeA acting as a bridging protein between laeA and velB. Forms a heterodimeric complex with vosA; the formation of the velB-vosA complex is light-dependent.

It is found in the nucleus. Its subcellular location is the cytoplasm. In terms of biological role, component of the velvet transcription factor complex that controls sexual/asexual developmental ratio in response to light, promoting sexual development in the darkness while stimulating asexual sporulation under illumination. The velvet complex acts as a global regulator for secondary metabolite gene expression. Component of the velB-VosA heterodimeric complex that plays a dual role in activating genes associated with spore maturation and repressing certain development-associated genes. The velB-VosA complex binds DNA through the DNA-binding domain of vosA that recognizes an 11-nucleotide consensus sequence 5'-CTGGCCGCGGC-3' consisting of two motifs in the promoters of key developmental regulatory genes. This Coprinopsis cinerea (strain Okayama-7 / 130 / ATCC MYA-4618 / FGSC 9003) (Inky cap fungus) protein is Velvet complex subunit B.